A 189-amino-acid polypeptide reads, in one-letter code: Ion-translocating oxidoreductase complex subunit B (189 aa).

The interval 1–26 is hydrophobic; the sequence is MSGIFIAIILLTILALLFGILLGFAA. The 4Fe-4S domain maps to 32–90; it reads EGDPLVDQLEALLPQTQCGQCGYPGCRPYAEAIANGEKINLCPPGGSATMEKLAEMAGV. [4Fe-4S] cluster is bound by residues Cys-49, Cys-52, Cys-57, Cys-73, Cys-114, Cys-117, Cys-120, Cys-124, Cys-144, Cys-147, Cys-150, and Cys-154. 4Fe-4S ferredoxin-type domains are found at residues 105–134 and 135–164; these read KVAY…GSGK and LMHT…MLPV.

The protein belongs to the 4Fe4S bacterial-type ferredoxin family. RnfB subfamily. The complex is composed of six subunits: RnfA, RnfB, RnfC, RnfD, RnfE and RnfG. [4Fe-4S] cluster is required as a cofactor.

The protein localises to the cell inner membrane. Its function is as follows. Part of a membrane-bound complex that couples electron transfer with translocation of ions across the membrane. In Shewanella sediminis (strain HAW-EB3), this protein is Ion-translocating oxidoreductase complex subunit B.